The sequence spans 293 residues: Ethanolamine ammonia-lyase small subunit (293 aa).

Adenosylcob(III)alamin-binding residues include V207 and E228.

Belongs to the EutC family. As to quaternary structure, the basic unit is a heterodimer which dimerizes to form tetramers. The heterotetramers trimerize; 6 large subunits form a core ring with 6 small subunits projecting outwards. The cofactor is adenosylcob(III)alamin.

The protein localises to the bacterial microcompartment. It carries out the reaction ethanolamine = acetaldehyde + NH4(+). The protein operates within amine and polyamine degradation; ethanolamine degradation. Its function is as follows. Catalyzes the deamination of various vicinal amino-alcohols to oxo compounds. Allows this organism to utilize ethanolamine as the sole source of nitrogen and carbon in the presence of external vitamin B12. The protein is Ethanolamine ammonia-lyase small subunit of Listeria innocua serovar 6a (strain ATCC BAA-680 / CLIP 11262).